A 78-amino-acid polypeptide reads, in one-letter code: MNYLEGTIDFAGQLRCQKYMNYGLCTSAVISYIYGYLVQDSYCVIKLFLILASLVALVCLPAWSMYNKNPLKFQKKKE.

Over 1–18 (MNYLEGTIDFAGQLRCQK) the chain is Cytoplasmic. A helical transmembrane segment spans residues 19-38 (YMNYGLCTSAVISYIYGYLV). Residues 39–42 (QDSY) are Lumenal-facing. A helical membrane pass occupies residues 43 to 63 (CVIKLFLILASLVALVCLPAW). The Cytoplasmic portion of the chain corresponds to 64–78 (SMYNKNPLKFQKKKE).

The protein belongs to the SPCS1 family. As to quaternary structure, component of the signal peptidase complex (SPC) composed of a catalytic subunit sec11 and three accessory subunits spc1, spc2 and spc3. The complex induces a local thinning of the ER membrane which is used to measure the length of the signal peptide (SP) h-region of protein substrates. This ensures the selectivity of the complex towards h-regions shorter than 18-20 amino acids. SPC associates with the translocon complex.

It is found in the endoplasmic reticulum membrane. In terms of biological role, component of the signal peptidase complex (SPC) which catalyzes the cleavage of N-terminal signal sequences from nascent proteins as they are translocated into the lumen of the endoplasmic reticulum. Dispensable for SPC enzymatic activity. The chain is Signal peptidase complex subunit 1 from Schizosaccharomyces pombe (strain 972 / ATCC 24843) (Fission yeast).